Consider the following 477-residue polypeptide: Transmembrane and coiled-coil domain protein 3 (477 aa).

At Ser46 the chain carries Phosphoserine. Residues 112–153 (KQVFEKKNQKSAHSIAQLQKKLEQYHRKLREIEQNGASRSSK) adopt a coiled-coil conformation. Disordered stretches follow at residues 168 to 188 (KDAHVKSRTAPHCMESSKSGM) and 249 to 277 (PKYGSDDECSSGTSGSADSNGNQSFGAGG). Ser253 carries the post-translational modification Phosphoserine. Residues 258-273 (SSGTSGSADSNGNQSF) are compositionally biased toward polar residues. Positions 282–398 (DSQGKLAVIL…KLELHQQEQQ (117 aa)) form a coiled coil. The next 2 helical transmembrane spans lie at 417–437 (VILAFMTVILVCVSTIAKFVS) and 450–470 (FFAVTLLAIFCKNWDHILCAI).

The protein belongs to the TEX28 family. May form homodimers and heterodimers with TMCC2 or TMCC3 via the coiled-coil domains. Interacts with ribosomal proteins RPL4 and RPS6. As to expression, widely expressed, with highest levels in brain, spinal cord and testis.

The protein resides in the endoplasmic reticulum membrane. This is Transmembrane and coiled-coil domain protein 3 from Homo sapiens (Human).